A 598-amino-acid chain; its full sequence is Probable translation initiation factor IF-2 (598 aa).

A tr-type G domain is found at 3–225 (LRCPIVSVLG…GLAQKFLEQK (223 aa)). Residues 12 to 19 (GHVDHGKT) form a G1 region. A GTP-binding site is contributed by 12-19 (GHVDHGKT). The segment at 37-41 (GITQH) is G2. Positions 76 to 79 (DTPG) are G3. GTP-binding positions include 76 to 80 (DTPGH) and 130 to 133 (NKLD). Residues 130 to 133 (NKLD) are G4. Residues 200–202 (SAI) form a G5 region.

Belongs to the TRAFAC class translation factor GTPase superfamily. Classic translation factor GTPase family. IF-2 subfamily.

In terms of biological role, function in general translation initiation by promoting the binding of the formylmethionine-tRNA to ribosomes. Seems to function along with eIF-2. The chain is Probable translation initiation factor IF-2 from Methanococcus vannielii (strain ATCC 35089 / DSM 1224 / JCM 13029 / OCM 148 / SB).